Consider the following 191-residue polypeptide: Putative 3-methyladenine DNA glycosylase (191 aa).

Belongs to the DNA glycosylase MPG family.

The sequence is that of Putative 3-methyladenine DNA glycosylase from Carboxydothermus hydrogenoformans (strain ATCC BAA-161 / DSM 6008 / Z-2901).